Consider the following 132-residue polypeptide: Small ribosomal subunit protein uS8 (132 aa).

It belongs to the universal ribosomal protein uS8 family. Part of the 30S ribosomal subunit. Contacts proteins S5 and S12.

In terms of biological role, one of the primary rRNA binding proteins, it binds directly to 16S rRNA central domain where it helps coordinate assembly of the platform of the 30S subunit. This Anoxybacillus flavithermus (strain DSM 21510 / WK1) protein is Small ribosomal subunit protein uS8.